A 473-amino-acid chain; its full sequence is Cardiolipin synthase C (473 aa).

PLD phosphodiesterase domains are found at residues 125–152 (LNRRMHNKSFTVDGVVTLVGGRNIGDAY) and 364–391 (SGASLHAKTFSIDGKTVFIGSFNFDPRS). Active-site residues include histidine 130, lysine 132, aspartate 137, histidine 369, lysine 371, and aspartate 376.

The protein belongs to the phospholipase D family. Cardiolipin synthase subfamily. ClsC sub-subfamily.

The enzyme catalyses a 1,2-diacyl-sn-glycero-3-phospho-(1'-sn-glycerol) + a 1,2-diacyl-sn-glycero-3-phosphoethanolamine = a cardiolipin + ethanolamine. With respect to regulation, full activity requires coexpression with the neighboring gene ymdB. In terms of biological role, catalyzes the synthesis of cardiolipin (CL) (diphosphatidylglycerol) from phosphatidylglycerol (PG) and phosphatidylethanolamine (PE). The protein is Cardiolipin synthase C of Escherichia coli (strain K12).